A 206-amino-acid chain; its full sequence is uncharacterized protein (206 aa).

4 consecutive transmembrane segments (helical) span residues 9 to 29 (ILSL…SVLT), 47 to 67 (LGVV…LAFL), 74 to 94 (FFVI…INTI), and 150 to 170 (IAVI…FYAF).

The protein belongs to the Rht family.

The protein resides in the cell membrane. This is an uncharacterized protein from Synechocystis sp. (strain ATCC 27184 / PCC 6803 / Kazusa).